The primary structure comprises 388 residues: UPF0496 protein 1 (388 aa).

Residues 1–25 (MGNSSSSGSHRPPRPASSESALPPA) form a disordered region. Residues 198–227 (QAVYRQQLTMLEKLQQRKHRLDKKVRAIKA) adopt a coiled-coil conformation. The next 2 membrane-spanning stretches (helical) occupy residues 234 to 254 (IIFA…AAIA) and 257 to 277 (PVAA…GKWI). A coiled-coil region spans residues 344 to 376 (VEEIKKKLEVFMKSVEDLGEQADRCSRDIRRAR).

The protein belongs to the UPF0496 family.

The protein resides in the membrane. This chain is UPF0496 protein 1, found in Oryza sativa subsp. japonica (Rice).